The sequence spans 1105 residues: Pheromone-regulated membrane protein 10 (1105 aa).

The segment covering 1 to 11 has biased composition (polar residues); the sequence is MSDNRPTYDTS. Disordered stretches follow at residues 1 to 22, 36 to 55, 65 to 123, 151 to 278, 385 to 473, and 520 to 656; these read MSDNRPTYDTSSSDEEPSNHFH, RKQNHKKHEKPTIAKQTASN, GSNH…FYGD, IKPK…GGGL, AGAS…FLRG, and EQKS…LRHK. Low complexity predominate over residues 67 to 82; sequence NHKFGNSINNNNNNAN. The span at 85-106 shows a compositional bias: polar residues; it reads LGSSSAGTNRRSLISPTSSTHV. The segment covering 162–178 has biased composition (acidic residues); the sequence is DSSDDDGNNLDEVEDET. A compositionally biased stretch (polar residues) spans 185-197; it reads LNQNHPPQQYYET. Residues 198-210 are compositionally biased toward acidic residues; it reads DSSDEDEEDDDEV. Positions 390-413 are enriched in polar residues; the sequence is LDHSQQSSAAPSTEITPSQSPNQH. Positions 417–439 are enriched in low complexity; sequence EKSNNNENNQQSTTVESSSSTSS. The span at 446 to 459 shows a compositional bias: basic and acidic residues; the sequence is LARRRASEERKKAE. Polar residues-rich tracts occupy residues 520–539, 592–606, and 624–633; these read EQKSASSLSRVSTGTSGTAL, RTNTVETQGSSNSEE, and MNANLPSFQN. The next 10 membrane-spanning stretches (helical) occupy residues 782–802, 809–829, 835–855, 860–880, 903–923, 938–958, 963–983, 986–1006, 1015–1035, and 1075–1095; these read PPWLCVLFYGLGSLAVTPFAF, LPISFGVGLCVGYLQFYVSSI, SVFEVSAAIVVAFIARGIGSI, LFCFSAIAQGSLAIILPGYII, VIYSLFLGFGITLGAALYGWI, AIDEKWRILFVPMFALCLGLI, WSQVPIMIVIAGIGYIGSFFA, HFSTVTEFTACIGAFIVGVLG, GMAVSAMLPAIFVQVPSGIAS, and VEVSIGISVGLFAAALIIYPF.

Belongs to the ThrE exporter (TC 2.A.79) family.

The protein localises to the membrane. This is Pheromone-regulated membrane protein 10 (PRM10) from Candida albicans (strain SC5314 / ATCC MYA-2876) (Yeast).